A 154-amino-acid chain; its full sequence is Superoxide dismutase [Cu-Zn] 1 (154 aa).

Cu cation is bound by residues His-47, His-49, and His-64. The cysteines at positions 58 and 147 are disulfide-linked. Residues His-64, His-72, His-81, and Asp-84 each contribute to the Zn(2+) site. His-121 contacts Cu cation. Arg-144 is a binding site for substrate.

The protein belongs to the Cu-Zn superoxide dismutase family. Homodimer. Requires Cu cation as cofactor. Zn(2+) is required as a cofactor.

The protein resides in the cytoplasm. It carries out the reaction 2 superoxide + 2 H(+) = H2O2 + O2. Functionally, destroys radicals which are normally produced within the cells and which are toxic to biological systems. The polypeptide is Superoxide dismutase [Cu-Zn] 1 (SOD1) (Debaryomyces hansenii (strain ATCC 36239 / CBS 767 / BCRC 21394 / JCM 1990 / NBRC 0083 / IGC 2968) (Yeast)).